Here is a 448-residue protein sequence, read N- to C-terminus: NADP-specific glutamate dehydrogenase (448 aa).

Residues Lys-88, Gln-109, and Lys-112 each contribute to the substrate site. Lys-124 (proton donor) is an active-site residue. Gly-163 provides a ligand contact to substrate. Residues Thr-207 and Asn-238 each contribute to the NADP(+) site. Ser-375 lines the substrate pocket.

This sequence belongs to the Glu/Leu/Phe/Val dehydrogenases family. As to quaternary structure, homohexamer.

It carries out the reaction L-glutamate + NADP(+) + H2O = 2-oxoglutarate + NH4(+) + NADPH + H(+). Functionally, catalyzes the reversible oxidative deamination of glutamate to alpha-ketoglutarate and ammonia. The sequence is that of NADP-specific glutamate dehydrogenase (gdhA) from Psychrobacter sp. (strain TAD1).